Reading from the N-terminus, the 158-residue chain is Siroheme decarboxylase beta subunit (158 aa).

This sequence belongs to the Ahb/Nir family. In terms of assembly, forms a heterodimer composed of AhbA and AhbB.

The catalysed reaction is siroheme + 2 H(+) = 12,18-didecarboxysiroheme + 2 CO2. It participates in porphyrin-containing compound metabolism; protoheme biosynthesis. In terms of biological role, involved in siroheme-dependent heme b biosynthesis. Catalyzes the decarboxylation of siroheme into didecarboxysiroheme. This chain is Siroheme decarboxylase beta subunit, found in Oleidesulfovibrio alaskensis (strain ATCC BAA-1058 / DSM 17464 / G20) (Desulfovibrio alaskensis).